Consider the following 392-residue polypeptide: Mycofactocin maturase MftC (392 aa).

Positions Leu18–Arg228 constitute a Radical SAM core domain. The [4Fe-4S] cluster site is built by Cys32, Cys36, Cys39, Cys253, Cys260, Cys271, Cys312, Cys315, Cys321, Cys325, and Cys343. A compositionally biased stretch (basic and acidic residues) spans Lys354–Arg367. A disordered region spans residues Lys354 to Lys377.

Belongs to the radical SAM superfamily. MftC family. [4Fe-4S] cluster serves as cofactor.

The enzyme catalyses [mycofactocin precursor peptide]-C-terminal glycyl-L-valyl-L-tyrosine + S-adenosyl-L-methionine = [mycofactocin precursor peptide]-C-terminal glycyl-N-{[2-(4-hydroxyphenyl)ethenyl]-3-methylbutanamide} + 5'-deoxyadenosine + L-methionine + CO2. It carries out the reaction [mycofactocin precursor peptide]-C-terminal glycyl-N-{[2-(4-hydroxyphenyl)ethenyl]-3-methylbutanamide} + AH2 + S-adenosyl-L-methionine = [mycofactocin precursor peptide]-C-terminal glycyl-N-{5-[(4-hydroxyphenyl)methyl]-4,4-dimethyl-2-oxopyrrolidin-3-yl}acetamide + 5'-deoxyadenosine + L-methionine + A + H(+). In terms of biological role, radical S-adenosylmethionine (SAM) enzyme responsible for the first step of the biosynthesis of the enzyme cofactor mycofactocin (MFT). Catalyzes two reactions at the C-terminus of the mycofactocin precursor (the MftA peptide). The first one is the oxidative decarboxylation of the C-terminal L-tyrosine of MftA, forming an unsaturated tyramine moiety. The second reaction is the cross-linking of the tyramine with the penultimate L-valine residue, forming a five-membered lactam ring. Its activity requires the presence of the MftB chaperone. Is required for the in vivo ethanol assimilation in M.smegmatis. In Mycolicibacterium smegmatis (strain ATCC 700084 / mc(2)155) (Mycobacterium smegmatis), this protein is Mycofactocin maturase MftC.